A 517-amino-acid polypeptide reads, in one-letter code: Protein MGF 505-2R (517 aa).

This sequence belongs to the asfivirus MGF 505 family.

Plays a role in virus cell tropism, and may be required for efficient virus replication in macrophages. This is Protein MGF 505-2R from African swine fever virus (isolate Warthog/Namibia/Wart80/1980) (ASFV).